The sequence spans 370 residues: Cytochrome b (370 aa).

The next 4 membrane-spanning stretches (helical) occupy residues 25–45, 69–90, 105–125, and 170–190; these read FGSM…FLAV, WLMQ…YIHI, WLSG…GYVL, and FFAL…LHIM. The heme b site is built by histidine 75 and histidine 89. Heme b-binding residues include histidine 174 and histidine 188. Histidine 193 is an a ubiquinone binding site. 4 helical membrane passes run 218–238, 280–300, 312–332, and 339–358; these read YKDL…VSFF, LGGA…PFTH, FMQL…WTAT, and FTTI…ISNP.

This sequence belongs to the cytochrome b family. The cytochrome bc1 complex contains 3 respiratory subunits (MT-CYB, CYC1 and UQCRFS1), 2 core proteins (UQCRC1 and UQCRC2) and probably 6 low-molecular weight proteins. Requires heme b as cofactor.

The protein resides in the mitochondrion inner membrane. Functionally, component of the ubiquinol-cytochrome c reductase complex (complex III or cytochrome b-c1 complex) that is part of the mitochondrial respiratory chain. The b-c1 complex mediates electron transfer from ubiquinol to cytochrome c. Contributes to the generation of a proton gradient across the mitochondrial membrane that is then used for ATP synthesis. This Chilabothrus fordii (Ford's boa) protein is Cytochrome b (MT-CYB).